Reading from the N-terminus, the 149-residue chain is Calmodulin (149 aa).

N-acetylalanine is present on alanine 2. EF-hand domains lie at glutamate 8–asparagine 43, proline 44–aspartate 79, aspartate 81–lysine 116, and leucine 117–lysine 149. 15 residues coordinate Ca(2+): aspartate 21, aspartate 23, aspartate 25, threonine 27, glutamate 32, aspartate 57, aspartate 59, asparagine 61, threonine 63, glutamate 68, aspartate 94, aspartate 96, asparagine 98, tyrosine 100, and glutamate 105. Residue lysine 116 is modified to N6,N6,N6-trimethyllysine. Ca(2+) is bound by residues aspartate 130, aspartate 132, aspartate 134, glutamine 136, and glutamate 141.

This sequence belongs to the calmodulin family.

Its function is as follows. Calmodulin acts as part of a calcium signal transduction pathway by mediating the control of a large number of enzymes, ion channels, aquaporins and other proteins through calcium-binding. Calcium-binding is required for the activation of calmodulin. Among the enzymes to be stimulated by the calmodulin-calcium complex are a number of protein kinases, such as myosin light-chain kinases and calmodulin-dependent protein kinase type II (CaMK2), and phosphatases. This is Calmodulin (calm) from Oreochromis mossambicus (Mozambique tilapia).